The following is a 481-amino-acid chain: Glutamyl-tRNA(Gln) amidotransferase subunit A (481 aa).

Residues K76 and S151 each act as charge relay system in the active site. S175 serves as the catalytic Acyl-ester intermediate.

The protein belongs to the amidase family. GatA subfamily. In terms of assembly, heterotrimer of A, B and C subunits.

The enzyme catalyses L-glutamyl-tRNA(Gln) + L-glutamine + ATP + H2O = L-glutaminyl-tRNA(Gln) + L-glutamate + ADP + phosphate + H(+). In terms of biological role, allows the formation of correctly charged Gln-tRNA(Gln) through the transamidation of misacylated Glu-tRNA(Gln) in organisms which lack glutaminyl-tRNA synthetase. The reaction takes place in the presence of glutamine and ATP through an activated gamma-phospho-Glu-tRNA(Gln). The polypeptide is Glutamyl-tRNA(Gln) amidotransferase subunit A (Neisseria meningitidis serogroup B (strain ATCC BAA-335 / MC58)).